The sequence spans 273 residues: Putative phosphoenolpyruvate synthase regulatory protein (273 aa).

ADP is bound at residue 153 to 160 (AVSRAGKT).

The protein belongs to the pyruvate, phosphate/water dikinase regulatory protein family. PSRP subfamily.

The enzyme catalyses [pyruvate, water dikinase] + ADP = [pyruvate, water dikinase]-phosphate + AMP + H(+). It carries out the reaction [pyruvate, water dikinase]-phosphate + phosphate + H(+) = [pyruvate, water dikinase] + diphosphate. Functionally, bifunctional serine/threonine kinase and phosphorylase involved in the regulation of the phosphoenolpyruvate synthase (PEPS) by catalyzing its phosphorylation/dephosphorylation. The sequence is that of Putative phosphoenolpyruvate synthase regulatory protein from Xanthomonas axonopodis pv. citri (strain 306).